Reading from the N-terminus, the 60-residue chain is Large ribosomal subunit protein uL30 (60 aa).

Belongs to the universal ribosomal protein uL30 family. In terms of assembly, part of the 50S ribosomal subunit.

This chain is Large ribosomal subunit protein uL30, found in Alcanivorax borkumensis (strain ATCC 700651 / DSM 11573 / NCIMB 13689 / SK2).